We begin with the raw amino-acid sequence, 408 residues long: Acetate kinase (408 aa).

Asn-7 is a Mg(2+) binding site. Residue Lys-14 coordinates ATP. Residue Arg-98 coordinates substrate. Asp-155 serves as the catalytic Proton donor/acceptor. ATP contacts are provided by residues 214–218 (HLGNG), 289–291 (DLR), and 337–341 (GVGEN). Position 390 (Glu-390) interacts with Mg(2+).

The protein belongs to the acetokinase family. As to quaternary structure, homodimer. Requires Mg(2+) as cofactor. It depends on Mn(2+) as a cofactor.

It localises to the cytoplasm. It carries out the reaction acetate + ATP = acetyl phosphate + ADP. It functions in the pathway metabolic intermediate biosynthesis; acetyl-CoA biosynthesis; acetyl-CoA from acetate: step 1/2. Functionally, catalyzes the formation of acetyl phosphate from acetate and ATP. Can also catalyze the reverse reaction. The protein is Acetate kinase of Cyanothece sp. (strain PCC 7425 / ATCC 29141).